Here is a 162-residue protein sequence, read N- to C-terminus: NADH-quinone oxidoreductase subunit I (162 aa).

2 consecutive 4Fe-4S ferredoxin-type domains span residues 54–83 (RRYE…INST) and 93–122 (SSYE…ETNI). C63, C66, C69, C73, C102, C105, C108, and C112 together coordinate [4Fe-4S] cluster.

Belongs to the complex I 23 kDa subunit family. In terms of assembly, NDH-1 is composed of 14 different subunits. Subunits NuoA, H, J, K, L, M, N constitute the membrane sector of the complex. It depends on [4Fe-4S] cluster as a cofactor.

Its subcellular location is the cell inner membrane. The catalysed reaction is a quinone + NADH + 5 H(+)(in) = a quinol + NAD(+) + 4 H(+)(out). In terms of biological role, NDH-1 shuttles electrons from NADH, via FMN and iron-sulfur (Fe-S) centers, to quinones in the respiratory chain. The immediate electron acceptor for the enzyme in this species is believed to be ubiquinone. Couples the redox reaction to proton translocation (for every two electrons transferred, four hydrogen ions are translocated across the cytoplasmic membrane), and thus conserves the redox energy in a proton gradient. The protein is NADH-quinone oxidoreductase subunit I of Francisella tularensis subsp. holarctica (strain FTNF002-00 / FTA).